We begin with the raw amino-acid sequence, 117 residues long: uncharacterized protein (117 aa).

2 helical membrane-spanning segments follow: residues 9–29 and 56–76; these read ITSH…FIPF and VIIV…FFIP.

The protein resides in the membrane. This is an uncharacterized protein from Saccharomyces cerevisiae (strain ATCC 204508 / S288c) (Baker's yeast).